The following is a 377-amino-acid chain: uncharacterized protein (377 aa).

2 helical membrane passes run 23–43 (LKFI…FIAY) and 251–271 (GSFI…SISY).

It localises to the cell membrane. This is an uncharacterized protein from Methanocaldococcus jannaschii (strain ATCC 43067 / DSM 2661 / JAL-1 / JCM 10045 / NBRC 100440) (Methanococcus jannaschii).